We begin with the raw amino-acid sequence, 121 residues long: Small ribosomal subunit protein uS13 (121 aa).

Residues 91-121 (HRKGLPLRGQRTRTNARTRKGPRKAGVALKK) form a disordered region.

The protein belongs to the universal ribosomal protein uS13 family. As to quaternary structure, part of the 30S ribosomal subunit. Forms a loose heterodimer with protein S19. Forms two bridges to the 50S subunit in the 70S ribosome.

Located at the top of the head of the 30S subunit, it contacts several helices of the 16S rRNA. In the 70S ribosome it contacts the 23S rRNA (bridge B1a) and protein L5 of the 50S subunit (bridge B1b), connecting the 2 subunits; these bridges are implicated in subunit movement. Contacts the tRNAs in the A and P-sites. The protein is Small ribosomal subunit protein uS13 of Cupriavidus pinatubonensis (strain JMP 134 / LMG 1197) (Cupriavidus necator (strain JMP 134)).